The sequence spans 390 residues: Homeobox protein Hox-B2a (390 aa).

4 disordered regions span residues 40 to 73 (STAI…TASN), 81 to 100 (TAPP…GAPL), 108 to 155 (KEKK…LDNV), and 211 to 338 (MKHK…SLPD). The span at 52–73 (PSLSPCTGNQARPRSQKRTASN) shows a compositional bias: polar residues. Residues 103–108 (EFPWMK) carry the Antp-type hexapeptide motif. Positions 118-135 (KPGATAAAAAASPSQASS) are enriched in low complexity. Positions 158-217 (SRRLRTAYTNTQLLELEKEFHFNKYLCRPRRVEIAALLDLTERQVKVWFQNRRMKHKRQT) form a DNA-binding region, homeobox. Low complexity predominate over residues 244-262 (SSQSLEVSGSGSAAPSESE). Positions 263-290 (TCPTTAAYTNSSDKSQPTPEEGQASQPE) are enriched in polar residues.

This sequence belongs to the Antp homeobox family. Proboscipedia subfamily.

It localises to the nucleus. Sequence-specific transcription factor which is part of a developmental regulatory system that provides cells with specific positional identities on the anterior-posterior axis. Plays an important role in the patterning of hindbrain and pharyngeal arches. In Danio rerio (Zebrafish), this protein is Homeobox protein Hox-B2a (hoxb2a).